A 331-amino-acid polypeptide reads, in one-letter code: HPr kinase/phosphorylase (331 aa).

Residues histidine 153 and lysine 174 contribute to the active site. Glycine 168–serine 175 contributes to the ATP binding site. Residue serine 175 participates in Mg(2+) binding. Catalysis depends on aspartate 192, which acts as the Proton acceptor; for phosphorylation activity. Proton donor; for dephosphorylation activity. The important for the catalytic mechanism of both phosphorylation and dephosphorylation stretch occupies residues methionine 217–aspartate 226. Glutamate 218 serves as a coordination point for Mg(2+). Arginine 259 is a catalytic residue. Positions proline 280 to lysine 285 are important for the catalytic mechanism of dephosphorylation.

Belongs to the HPrK/P family. Homohexamer. The cofactor is Mg(2+).

The enzyme catalyses [HPr protein]-L-serine + ATP = [HPr protein]-O-phospho-L-serine + ADP + H(+). The catalysed reaction is [HPr protein]-O-phospho-L-serine + phosphate + H(+) = [HPr protein]-L-serine + diphosphate. In terms of biological role, catalyzes the ATP- as well as the pyrophosphate-dependent phosphorylation of a specific serine residue in HPr, a phosphocarrier protein of the phosphoenolpyruvate-dependent sugar phosphotransferase system (PTS). HprK/P also catalyzes the pyrophosphate-producing, inorganic phosphate-dependent dephosphorylation (phosphorolysis) of seryl-phosphorylated HPr (P-Ser-HPr). The chain is HPr kinase/phosphorylase from Pelodictyon phaeoclathratiforme (strain DSM 5477 / BU-1).